The sequence spans 120 residues: Glycine cleavage system H protein (120 aa).

In terms of domain architecture, Lipoyl-binding spans 17 to 99 (VATVGITTYA…QGAGWFFKLK (83 aa)). An N6-lipoyllysine modification is found at lysine 58.

Belongs to the GcvH family. As to quaternary structure, the glycine cleavage system is composed of four proteins: P, T, L and H. Requires (R)-lipoate as cofactor.

Its function is as follows. The glycine cleavage system catalyzes the degradation of glycine. The H protein shuttles the methylamine group of glycine from the P protein to the T protein. This Rhizobium etli (strain CIAT 652) protein is Glycine cleavage system H protein.